The following is a 118-amino-acid chain: Small ribosomal subunit protein uS13 (118 aa).

The disordered stretch occupies residues Gly-94–Lys-118.

Belongs to the universal ribosomal protein uS13 family. Part of the 30S ribosomal subunit. Forms a loose heterodimer with protein S19. Forms two bridges to the 50S subunit in the 70S ribosome.

Functionally, located at the top of the head of the 30S subunit, it contacts several helices of the 16S rRNA. In the 70S ribosome it contacts the 23S rRNA (bridge B1a) and protein L5 of the 50S subunit (bridge B1b), connecting the 2 subunits; these bridges are implicated in subunit movement. Contacts the tRNAs in the A and P-sites. The chain is Small ribosomal subunit protein uS13 from Mannheimia succiniciproducens (strain KCTC 0769BP / MBEL55E).